A 123-amino-acid polypeptide reads, in one-letter code: Large ribosomal subunit protein bL12 (123 aa).

The protein belongs to the bacterial ribosomal protein bL12 family. Homodimer. Part of the ribosomal stalk of the 50S ribosomal subunit. Forms a multimeric L10(L12)X complex, where L10 forms an elongated spine to which 2 to 4 L12 dimers bind in a sequential fashion. Binds GTP-bound translation factors.

In terms of biological role, forms part of the ribosomal stalk which helps the ribosome interact with GTP-bound translation factors. Is thus essential for accurate translation. The chain is Large ribosomal subunit protein bL12 from Rickettsia bellii (strain OSU 85-389).